The primary structure comprises 397 residues: Ribosomal RNA large subunit methyltransferase I (397 aa).

Residues 2 to 80 (SAAIYLVKGR…QDVNRAFFVK (79 aa)) enclose the PUA domain.

It belongs to the methyltransferase superfamily. RlmI family.

Its subcellular location is the cytoplasm. The catalysed reaction is cytidine(1962) in 23S rRNA + S-adenosyl-L-methionine = 5-methylcytidine(1962) in 23S rRNA + S-adenosyl-L-homocysteine + H(+). Specifically methylates the cytosine at position 1962 (m5C1962) of 23S rRNA. In Vibrio vulnificus (strain YJ016), this protein is Ribosomal RNA large subunit methyltransferase I.